The following is a 281-amino-acid chain: Bifunctional protein FolD (281 aa).

Residues glycine 165–glycine 167, threonine 192, and valine 233 contribute to the NADP(+) site.

It belongs to the tetrahydrofolate dehydrogenase/cyclohydrolase family. Homodimer.

It catalyses the reaction (6R)-5,10-methylene-5,6,7,8-tetrahydrofolate + NADP(+) = (6R)-5,10-methenyltetrahydrofolate + NADPH. The catalysed reaction is (6R)-5,10-methenyltetrahydrofolate + H2O = (6R)-10-formyltetrahydrofolate + H(+). Its pathway is one-carbon metabolism; tetrahydrofolate interconversion. Its function is as follows. Catalyzes the oxidation of 5,10-methylenetetrahydrofolate to 5,10-methenyltetrahydrofolate and then the hydrolysis of 5,10-methenyltetrahydrofolate to 10-formyltetrahydrofolate. This chain is Bifunctional protein FolD, found in Mycolicibacterium paratuberculosis (strain ATCC BAA-968 / K-10) (Mycobacterium paratuberculosis).